The following is a 434-amino-acid chain: Trigger factor (434 aa).

The 86-residue stretch at 161–246 (GDRVVIDFAG…VKGVEAPILP (86 aa)) folds into the PPIase FKBP-type domain.

The protein belongs to the FKBP-type PPIase family. Tig subfamily.

Its subcellular location is the cytoplasm. It catalyses the reaction [protein]-peptidylproline (omega=180) = [protein]-peptidylproline (omega=0). Functionally, involved in protein export. Acts as a chaperone by maintaining the newly synthesized protein in an open conformation. Functions as a peptidyl-prolyl cis-trans isomerase. The polypeptide is Trigger factor (Aromatoleum aromaticum (strain DSM 19018 / LMG 30748 / EbN1) (Azoarcus sp. (strain EbN1))).